The following is a 699-amino-acid chain: Elongation factor G (699 aa).

The tr-type G domain occupies 8–287 (EKLRNIGIVA…AVIDYLPSPI (280 aa)). GTP-binding positions include 17-24 (AHIDAGKT), 85-89 (DTPGH), and 139-142 (NKMD).

It belongs to the TRAFAC class translation factor GTPase superfamily. Classic translation factor GTPase family. EF-G/EF-2 subfamily.

The protein localises to the cytoplasm. Functionally, catalyzes the GTP-dependent ribosomal translocation step during translation elongation. During this step, the ribosome changes from the pre-translocational (PRE) to the post-translocational (POST) state as the newly formed A-site-bound peptidyl-tRNA and P-site-bound deacylated tRNA move to the P and E sites, respectively. Catalyzes the coordinated movement of the two tRNA molecules, the mRNA and conformational changes in the ribosome. In Aquifex aeolicus (strain VF5), this protein is Elongation factor G (fusA).